Here is a 264-residue protein sequence, read N- to C-terminus: Thymidylate synthase (264 aa).

Residue Arg-21 coordinates dUMP. Residue His-51 coordinates (6R)-5,10-methylene-5,6,7,8-tetrahydrofolate. 126-127 (RR) lines the dUMP pocket. The active-site Nucleophile is the Cys-146. DUMP is bound by residues 166-169 (RSCD), Asn-177, and 207-209 (HLY). Residue Asp-169 coordinates (6R)-5,10-methylene-5,6,7,8-tetrahydrofolate. A (6R)-5,10-methylene-5,6,7,8-tetrahydrofolate-binding site is contributed by Ala-263.

This sequence belongs to the thymidylate synthase family. Bacterial-type ThyA subfamily. Homodimer.

It is found in the cytoplasm. The catalysed reaction is dUMP + (6R)-5,10-methylene-5,6,7,8-tetrahydrofolate = 7,8-dihydrofolate + dTMP. Its pathway is pyrimidine metabolism; dTTP biosynthesis. Catalyzes the reductive methylation of 2'-deoxyuridine-5'-monophosphate (dUMP) to 2'-deoxythymidine-5'-monophosphate (dTMP) while utilizing 5,10-methylenetetrahydrofolate (mTHF) as the methyl donor and reductant in the reaction, yielding dihydrofolate (DHF) as a by-product. This enzymatic reaction provides an intracellular de novo source of dTMP, an essential precursor for DNA biosynthesis. This chain is Thymidylate synthase, found in Shewanella baltica (strain OS185).